Here is a 614-residue protein sequence, read N- to C-terminus: Zinc metalloproteinase-disintegrin-like Eoc1 (614 aa).

The N-terminal stretch at 1–19 (MQVLLITISLAVLPYLGSS) is a signal peptide. Positions 20-193 (IILESGIVND…KASQLNLTPE (174 aa)) are excised as a propeptide. Gln194 is modified (pyrrolidone carboxylic acid). Residues 202–398 (KHIKVAIVAD…KMPQCILIKP (197 aa)) enclose the Peptidase M12B domain. Asn268 is a glycosylation site (N-linked (GlcNAc...) asparagine). Disulfide bonds link Cys313-Cys393, Cys353-Cys377, and Cys355-Cys360. Position 338 (His338) interacts with Zn(2+). Glu339 is a catalytic residue. Residues His342 and His348 each coordinate Zn(2+). Asn376 carries N-linked (GlcNAc...) asparagine glycosylation. The 87-residue stretch at 406–492 (PPVCGNSLVE…ECPADQFQRN (87 aa)) folds into the Disintegrin domain. Positions 408, 411, 413, 415, 418, and 421 each coordinate Ca(2+). Disulfide bonds link Cys409–Cys438, Cys420–Cys433, Cys422–Cys428, Cys432–Cys455, Cys446–Cys452, Cys451–Cys477, Cys464–Cys484, Cys471–Cys503, Cys496–Cys508, Cys515–Cys565, Cys530–Cys576, Cys543–Cys553, Cys560–Cys602, and Cys596–Cys607. The D/ECD-tripeptide motif lies at 470-472 (ECD). N-linked (GlcNAc...) asparagine glycosylation occurs at Asn498.

This sequence belongs to the venom metalloproteinase (M12B) family. P-III subfamily. P-IIIc sub-subfamily. In terms of assembly, heterodimer; disulfide-linked. Zn(2+) serves as cofactor. In terms of tissue distribution, expressed by the venom gland.

The protein resides in the secreted. This metalloproteinase hydrolyzes azocasein, and oxidized insulin B-chain. Also hydrolyzes the alpha-chain (FGA) and more slowly the beta-chain of fibrinogen (FGB), without affecting the gamma-chain. Does not cleave fibrin. Inhibits endothelial cell adhesion to extracellular matrix proteins such as fibrinogen, fibronectin, vitronectin, collagen I, and collagen IV. Induces apoptosis in vascular endothelial cells. In Echis ocellatus (Ocellated saw-scaled viper), this protein is Zinc metalloproteinase-disintegrin-like Eoc1 (Svmp3-Eoc1).